The chain runs to 495 residues: Phosphomethylpyrimidine synthase (495 aa).

Substrate-binding positions include asparagine 125, methionine 154, tyrosine 183, histidine 219, serine 239–glycine 241, aspartate 280–arginine 283, and glutamate 319. Residue histidine 323 coordinates Zn(2+). Tyrosine 346 is a binding site for substrate. Histidine 387 contributes to the Zn(2+) binding site. [4Fe-4S] cluster is bound by residues cysteine 467, cysteine 470, and cysteine 475.

The protein belongs to the ThiC family. It depends on [4Fe-4S] cluster as a cofactor.

The catalysed reaction is 5-amino-1-(5-phospho-beta-D-ribosyl)imidazole + S-adenosyl-L-methionine = 4-amino-2-methyl-5-(phosphooxymethyl)pyrimidine + CO + 5'-deoxyadenosine + formate + L-methionine + 3 H(+). It participates in cofactor biosynthesis; thiamine diphosphate biosynthesis. Its function is as follows. Catalyzes the synthesis of the hydroxymethylpyrimidine phosphate (HMP-P) moiety of thiamine from aminoimidazole ribotide (AIR) in a radical S-adenosyl-L-methionine (SAM)-dependent reaction. This chain is Phosphomethylpyrimidine synthase, found in Leptospira interrogans serogroup Icterohaemorrhagiae serovar Lai (strain 56601).